We begin with the raw amino-acid sequence, 403 residues long: Farnesyl pyrophosphate synthase (403 aa).

Mg(2+) is bound by residues D156 and D160. The DDXXD motif motif lies at 156 to 160 (DDLAD).

The protein belongs to the FPP/GGPP synthase family. The cofactor is Mg(2+).

The enzyme catalyses isopentenyl diphosphate + (2E)-geranyl diphosphate = (2Z,6E)-farnesyl diphosphate + diphosphate. It participates in pheromone biosynthesis. Functionally, farnesyl pyrophosphate synthase involved in pheromone biosynthesis by catalyzing the formation of (2Z,6E)-farnesyl diphosphate. The chain is Farnesyl pyrophosphate synthase from Nezara viridula (Southern green stink bug).